Here is a 449-residue protein sequence, read N- to C-terminus: Chromosomal replication initiator protein DnaA (449 aa).

Positions 1–83 are domain I, interacts with DnaA modulators; the sequence is MDDSLWSACL…VELEIGSPPT (83 aa). Residues 77 to 114 are disordered; the sequence is EIGSPPTPDQREAATGATRAAPAQRSSEPRQRPVDSNL. Residues 83–112 form a domain II region; that stretch reads TPDQREAATGATRAAPAQRSSEPRQRPVDS. Residues 89-99 are compositionally biased toward low complexity; the sequence is AATGATRAAPA. Positions 113 to 329 are domain III, AAA+ region; sequence NLNPGFTFDS…GALRRITANA (217 aa). Residues G157, G159, K160, and T161 each coordinate ATP. The domain IV, binds dsDNA stretch occupies residues 330–449; it reads QFTGRAIDVD…YDNLLRTLST (120 aa).

Belongs to the DnaA family. In terms of assembly, oligomerizes as a right-handed, spiral filament on DNA at oriC.

It localises to the cytoplasm. Its function is as follows. Plays an essential role in the initiation and regulation of chromosomal replication. ATP-DnaA binds to the origin of replication (oriC) to initiate formation of the DNA replication initiation complex once per cell cycle. Binds the DnaA box (a 9 base pair repeat at the origin) and separates the double-stranded (ds)DNA. Forms a right-handed helical filament on oriC DNA; dsDNA binds to the exterior of the filament while single-stranded (ss)DNA is stabiized in the filament's interior. The ATP-DnaA-oriC complex binds and stabilizes one strand of the AT-rich DNA unwinding element (DUE), permitting loading of DNA polymerase. After initiation quickly degrades to an ADP-DnaA complex that is not apt for DNA replication. Binds acidic phospholipids. The protein is Chromosomal replication initiator protein DnaA of Halorhodospira halophila (strain DSM 244 / SL1) (Ectothiorhodospira halophila (strain DSM 244 / SL1)).